Consider the following 468-residue polypeptide: Chromosomal replication initiator protein DnaA (468 aa).

A domain I, interacts with DnaA modulators region spans residues 1-84; the sequence is MSSSLWLQCL…RFEVGSRRVA (84 aa). The segment at 84–131 is domain II; it reads AAPKPAPTRTPADVAAESSAPAQLQARKPVHKTWDDDAQVIADINHRS. Residues 85–95 show a composition bias toward low complexity; the sequence is APKPAPTRTPA. Residues 85 to 104 are disordered; sequence APKPAPTRTPADVAAESSAP. The segment at 132-348 is domain III, AAA+ region; the sequence is NVNPKHKFNN…GALNRVIANA (217 aa). ATP is bound by residues Gly-176, Gly-178, Lys-179, and Thr-180. The tract at residues 349-468 is domain IV, binds dsDNA; that stretch reads NFTGRPITID…YSNLIRTLSS (120 aa).

Belongs to the DnaA family. As to quaternary structure, oligomerizes as a right-handed, spiral filament on DNA at oriC.

The protein resides in the cytoplasm. Plays an essential role in the initiation and regulation of chromosomal replication. ATP-DnaA binds to the origin of replication (oriC) to initiate formation of the DNA replication initiation complex once per cell cycle. Binds the DnaA box (a 9 base pair repeat at the origin) and separates the double-stranded (ds)DNA. Forms a right-handed helical filament on oriC DNA; dsDNA binds to the exterior of the filament while single-stranded (ss)DNA is stabiized in the filament's interior. The ATP-DnaA-oriC complex binds and stabilizes one strand of the AT-rich DNA unwinding element (DUE), permitting loading of DNA polymerase. After initiation quickly degrades to an ADP-DnaA complex that is not apt for DNA replication. Binds acidic phospholipids. Functionally, complements a temperature-sensitive E.coli mutant, the DnaA consensus is 5'-TT(A/T)TNCACA-3'. This is Chromosomal replication initiator protein DnaA from Vibrio harveyi (Beneckea harveyi).